A 189-amino-acid polypeptide reads, in one-letter code: Proline-rich protein 29 (189 aa).

A disordered region spans residues 152-189 (SREREVRAVPPPPPPSATGTVGADVPPASDYYDAESLL).

The chain is Proline-rich protein 29 (PRR29) from Homo sapiens (Human).